The primary structure comprises 480 residues: Cobyric acid synthase (480 aa).

The GATase cobBQ-type domain occupies 249–436; the sequence is KLKVVVPVLT…LHGFLDSEAA (188 aa). Cysteine 330 acts as the Nucleophile in catalysis. The active site involves histidine 428.

Belongs to the CobB/CobQ family. CobQ subfamily.

Its pathway is cofactor biosynthesis; adenosylcobalamin biosynthesis. In terms of biological role, catalyzes amidations at positions B, D, E, and G on adenosylcobyrinic A,C-diamide. NH(2) groups are provided by glutamine, and one molecule of ATP is hydrogenolyzed for each amidation. This Vibrio vulnificus (strain YJ016) protein is Cobyric acid synthase.